The primary structure comprises 460 residues: Ammonium transporter 1 member 3 (460 aa).

The next 10 helical transmembrane spans lie at 15–37, 50–72, 98–117, 124–146, 166–188, 209–227, 255–277, 305–327, 337–356, and 377–399; these read AIYL…MLCA, LTNV…AFAF, FFLY…SGSI, TAYL…HWLW, IDFA…GSIV, NATL…WFGF, AVTT…RLLV, PWAA…ILAL, AAQL…GLFA, and GLIL…SIVV.

This sequence belongs to the ammonia transporter channel (TC 1.A.11.2) family. In terms of tissue distribution, leaves.

It is found in the membrane. In terms of biological role, ammonium transporter that may be involved in ammonium transport throughout the plant. This chain is Ammonium transporter 1 member 3 (AMT1-3), found in Solanum lycopersicum (Tomato).